The primary structure comprises 30 residues: Cycloviolacin-O1 (30 aa).

Residues 1–30 (GIPCAESCVYIPCTVTALLGCSCSNRVCYN) constitute a cross-link (cyclopeptide (Gly-Asn)). Cystine bridges form between Cys4/Cys21, Cys8/Cys23, and Cys13/Cys28.

In terms of processing, this is a cyclic peptide. In terms of tissue distribution, expressed in leaves, petals, petioles and roots but not in runners (at protein level).

Probably participates in a plant defense mechanism. The sequence is that of Cycloviolacin-O1 from Viola odorata (Sweet violet).